The primary structure comprises 1403 residues: Envelopment polyprotein (1403 aa).

A signal peptide spans 1 to 17; the sequence is MLLNIVLISNLACLAFA. The Lumenal segment spans residues 18-209; sequence LPLKEGTRGS…ELMIESFCTN (192 aa). Asparagine 40 carries N-linked (GlcNAc...) asparagine; by host glycosylation. The chain crosses the membrane as a helical span at residues 210–230; the sequence is LELILLVTFILVGSVMMMILT. Residues 231-314 are Cytoplasmic-facing; the sequence is KTYIVYVFIP…PKTRKLCKSK (84 aa). The helical transmembrane segment at 315–335 threads the bilayer; it reads ISNIVLCVITSLIFFSFITPI. The Lumenal segment spans residues 336 to 361; sequence SSQCIDIEKLPDEYITCKRELANIKS. A helical transmembrane segment spans residues 362–382; sequence LTIDDTYSFIYSCTCIIVLIL. Residues 383–448 lie on the Cytoplasmic side of the membrane; sequence LKKAAKYILY…FKFESSYNRT (66 aa). The chain crosses the membrane as a helical span at residues 449–469; the sequence is GLIIFMLLLVPTIVMTQETSI. Residues 470 to 1361 are Lumenal-facing; sequence NCKNIQSTQL…GNLSFYWRLT (892 aa). The cysteines at positions 471 and 487 are disulfide-linked. Asparagine 493 is a glycosylation site (N-linked (GlcNAc...) asparagine; by host). Intrachain disulfides connect cysteine 523–cysteine 550, cysteine 580–cysteine 589, and cysteine 591–cysteine 598. N-linked (GlcNAc...) asparagine; by host glycosylation is found at asparagine 686 and asparagine 1353. A helical membrane pass occupies residues 1362–1382; that stretch reads IYIIISLIMLILFLYILIPLC. Over 1383-1403 the chain is Cytoplasmic; that stretch reads KRLKGLLEYNERIYQMENKFK.

It belongs to the nairovirus envelope glycoprotein family. Heterodimer with glycoprotein C; in prefusion state. In terms of assembly, heterodimer with glycoprotein N; in prefusion state. Homotrimeric; in postfusion state. Post-translationally, specific enzymatic cleavage by host MBTPS1/S1P/SKI-1 endopeptidase yield glycoprotein N. Specific enzymatic cleavages by host furin-like protease and MBTPS1/S1P endopeptidase yield GP38. In terms of processing, glycosylated.

The protein localises to the host endoplasmic reticulum membrane. Its subcellular location is the virion membrane. The protein resides in the host Golgi apparatus membrane. Glycoprotein C and glycoprotein N interact with each other and are present at the surface of the virion. Glycoprotein N probably locks the Gn-Gc complex in a prefusion state. Glycoprotein N and glycoprotein C are able to attach the virion to host cell receptors. This attachment induces virion internalization predominantly through clathrin-dependent endocytosis. Functionally, glycoprotein C and glycoprotein N interact with each other and are present at the surface of the virion. The spikes at the surface of the virion are formed by an N-terminal extension of glycoprotein C. Glycoprotein N and glycoprotein C are able to attach the virion to host cell receptors. This attachment induces virion internalization predominantly through clathrin-dependent endocytosis. Class II fusion protein that promotes fusion of viral membrane with host endosomal membrane after endocytosis of the virion. Exposure to potassium is necessary for the conformational change leading to fusion. The polypeptide is Envelopment polyprotein (GP) (Bos taurus (Bovine)).